Reading from the N-terminus, the 101-residue chain is NADH-ubiquinone oxidoreductase chain 4L (101 aa).

3 helical membrane passes run L5–N25, I29–F49, and L64–Y84.

The protein belongs to the complex I subunit 4L family.

It is found in the mitochondrion membrane. The enzyme catalyses a ubiquinone + NADH + 5 H(+)(in) = a ubiquinol + NAD(+) + 4 H(+)(out). Functionally, core subunit of the mitochondrial membrane respiratory chain NADH dehydrogenase (Complex I) that is believed to belong to the minimal assembly required for catalysis. Complex I functions in the transfer of electrons from NADH to the respiratory chain. The immediate electron acceptor for the enzyme is believed to be ubiquinone. The sequence is that of NADH-ubiquinone oxidoreductase chain 4L (ND4L) from Chondrus crispus (Carrageen Irish moss).